The primary structure comprises 243 residues: Carboxy-S-adenosyl-L-methionine synthase (243 aa).

S-adenosyl-L-methionine is bound by residues tyrosine 35, glycine 68 to serine 70, aspartate 92 to asparagine 93, and arginine 199.

Belongs to the class I-like SAM-binding methyltransferase superfamily. Cx-SAM synthase family. As to quaternary structure, homodimer.

It carries out the reaction prephenate + S-adenosyl-L-methionine = carboxy-S-adenosyl-L-methionine + 3-phenylpyruvate + H2O. In terms of biological role, catalyzes the conversion of S-adenosyl-L-methionine (SAM) to carboxy-S-adenosyl-L-methionine (Cx-SAM). This chain is Carboxy-S-adenosyl-L-methionine synthase, found in Helicobacter pylori (strain ATCC 700392 / 26695) (Campylobacter pylori).